The following is a 186-amino-acid chain: Casparian strip membrane protein 1 (186 aa).

At 1–26 (MKGGSIELGEVSKNASTNKGVKRGLS) the chain is on the cytoplasmic side. Residues 27–47 (IMDFILRIIAGVATLASAVAM) form a helical membrane-spanning segment. The Extracellular portion of the chain corresponds to 48 to 72 (GTTDERLPFATSFVQFRAEYDDLPS). The helical transmembrane segment at 73–93 (FVFFVLANSIVCGYLALSLIL) threads the bilayer. Residues 94–107 (SILHIVRSTAVKSR) lie on the Cytoplasmic side of the membrane. The helical transmembrane segment at 108–128 (ILLIVLDMVMMGLLAAAASAA) threads the bilayer. Topologically, residues 129–157 (ASIVYIAHYGNTQANWFPICQQYNSFCER) are extracellular. A helical membrane pass occupies residues 158-178 (ISGSLIGSYIAVALFIIIILL). At 179–186 (SQSAISRN) the chain is on the cytoplasmic side.

Belongs to the Casparian strip membrane proteins (CASP) family. As to quaternary structure, homodimer and heterodimers.

The protein resides in the cell membrane. Functionally, regulates membrane-cell wall junctions and localized cell wall deposition. Required for establishment of the Casparian strip membrane domain (CSD) and the subsequent formation of Casparian strips, a cell wall modification of the root endodermis that determines an apoplastic barrier between the intraorganismal apoplasm and the extraorganismal apoplasm and prevents lateral diffusion. The chain is Casparian strip membrane protein 1 from Medicago truncatula (Barrel medic).